The primary structure comprises 141 residues: Large ribosomal subunit protein uL22c (141 aa).

The protein belongs to the universal ribosomal protein uL22 family. Part of the 50S ribosomal subunit.

The protein localises to the plastid. It localises to the chloroplast. In terms of biological role, this protein binds specifically to 23S rRNA. Its function is as follows. The globular domain of the protein is located near the polypeptide exit tunnel on the outside of the subunit, while an extended beta-hairpin is found that lines the wall of the exit tunnel in the center of the 70S ribosome. This Chloranthus spicatus (Chulantree) protein is Large ribosomal subunit protein uL22c (rpl22).